The sequence spans 1445 residues: Tensin-3 (1445 aa).

Residues 1–170 form the Phosphatase tensin-type domain; it reads MEEGHGLDLT…QFLSGLLSGS (170 aa). Residues 175-301 enclose the C2 tensin-type domain; sequence ASPLFLHFVI…GKVELVFSAT (127 aa). Thr-323 is subject to Phosphothreonine. A phosphoserine mark is found at Ser-332 and Ser-361. The disordered stretch occupies residues 358-421; the sequence is RKKSSSDPGI…GTRRGLSAQE (64 aa). The span at 386–400 shows a compositional bias: polar residues; the sequence is TLSVSSDSGHSTASA. 2 positions are modified to phosphoserine: Ser-440 and Ser-516. The disordered stretch occupies residues 538–568; sequence VPDLGLGMDGPYERERTFGSREPKQPQPLLR. Positions 548–561 are enriched in basic and acidic residues; that stretch reads PYERERTFGSREPK. A Phosphoserine modification is found at Ser-571. 2 disordered regions span residues 618-695 and 717-769; these read DNPG…TLDI and PTHM…QPLG. Phosphothreonine is present on Thr-632. A phosphoserine mark is found at Ser-649, Ser-660, Ser-687, and Ser-690. The segment covering 723–733 has biased composition (polar residues); sequence LGSQANGSVSP. Phosphoserine is present on residues Ser-735 and Ser-776. At Tyr-780 the chain carries Phosphotyrosine. 3 positions are modified to phosphoserine: Ser-811, Ser-866, and Ser-901. 2 disordered regions span residues 859-981 and 1076-1127; these read ALRH…TRKD and GHSS…PHSG. Over residues 864–873 the composition is skewed to pro residues; sequence PFSPPEPPLS. Over residues 914-935 the composition is skewed to polar residues; that stretch reads ASSTPSFQQAFASSCTISSNGP. Positions 1099-1109 are enriched in basic and acidic residues; that stretch reads PEKKRASEGDR. Positions 1110 to 1127 are enriched in low complexity; sequence SLGSVSPSSSGFSSPHSG. Phosphoserine is present on residues Ser-1149 and Ser-1154. The 111-residue stretch at 1172 to 1282 folds into the SH2 domain; the sequence is WYKADISREQ…ALPCKLLIPE (111 aa). Residues Ser-1293 and Ser-1441 each carry the phosphoserine modification. Residues 1310 to 1444 form the PTB domain; the sequence is ACNVWYLNSV…SKVMIGSPKK (135 aa).

The protein belongs to the PTEN phosphatase protein family. In terms of assembly, interacts with EGFR; EGF promotes the interaction with EGFR. Interacts with PTK2/FAK1 and BCAR1. Tyrosine phosphorylation is critical for these interactions. Interacts with Rho GTPase-activating protein DLC1 and with the regulatory p85 subunit of the PI3K kinase complex; in resting cells, interacts (via C2 tensin-type domain) with DLC1 but, following growth factor stimulation, TNS3 is phosphorylated which leads to weakened interaction with DLC1 and enhanced interaction (via C2 tensin-type domain) with p85 while DLC1 interaction with PTEN increases. Interacts (when phosphorylated on the SH2 domain) with integrins ITGB1, ITGB3 and ITGB5 and with scaffolding protein PEAK1 (phosphorylated on 'Tyr-635'); mediates the association of PEAK1 with ITGB1, ITGB3 and ITGB5. Interacts (via N-terminus) with DOCK5 (via N-terminus); the interaction increases DOCK5 guanine nucleotide exchange activity towards Rac. Interacts with receptor tyrosine kinase MET. Post-translationally, phosphorylated on Ser/Thr and Tyr residues. Phosphorylated on Thr-323 in the C2-type tensin domain following EGF stimulation which changes its binding preference from DLC1 to the p85 regulatory subunit of the PI3K kinase complex. EGF induces tyrosine phosphorylation in a time- and dose-dependent manner. Phosphorylation of the SH2 domain enhances interaction with PEAK1. In terms of tissue distribution, expressed in umbilical vein endothelial cells, epithelial cells, and fibroblasts cells (at protein level). Highly expressed in thyroid, kidney and placenta. Low expression in heart, skeletal muscle, spleen, liver, and lung. Expressed at higher levels in tonsil-derived mesenchymal stem cells (MSCs) than in adipose tissue-derived MSCs or bone marrow-derived MSCs. Expressed in tumor endothelial cells. Expression seems to be down-regulated in thyroid tumor tissues and in anaplastic carcinomas.

Its subcellular location is the cell junction. It is found in the focal adhesion. The protein resides in the cell projection. The protein localises to the podosome. Functionally, may act as a protein phosphatase and/or a lipid phosphatase. Involved in the dissociation of the integrin-tensin-actin complex. EGF activates TNS4 and down-regulates TNS3 which results in capping the tail of ITGB1. Increases DOCK5 guanine nucleotide exchange activity towards Rac and plays a role in osteoclast podosome organization. Enhances RHOA activation in the presence of DLC1. Required for growth factor-induced epithelial cell migration; growth factor stimulation induces TNS3 phosphorylation which changes its binding preference from DLC1 to the p85 regulatory subunit of the PI3K kinase complex, displacing PI3K inhibitor PTEN and resulting in translocation of the TNS3-p85 complex to the leading edge of migrating cells to promote RAC1 activation. Meanwhile, PTEN switches binding preference from p85 to DLC1 and the PTEN-DLC1 complex translocates to the posterior of migrating cells to activate RHOA. Acts as an adapter protein by bridging the association of scaffolding protein PEAK1 with integrins ITGB1, ITGB3 and ITGB5 which contributes to the promotion of cell migration. Controls tonsil-derived mesenchymal stem cell proliferation and differentiation by regulating the activity of integrin ITGB1. This Homo sapiens (Human) protein is Tensin-3 (TNS3).